The primary structure comprises 546 residues: MTPGEIRRLYFIVRTFLSYGLDELIPKMRITLPLRIWRRMLFWMPNRHKDKLLGERLRLALQELGPVWIKFGQMLSTRRDLFPPQIADQLALLQDRVAPFDGARAKQQIEEAMGNIPVETWFDDFDIKPLASASIAQVHTARLKENGKEIVIKVIRPDILPVIRADMKLIYRLARWVPRLLPDGRRLRPMEVVREYEKTLIDELNLLRESANAIQLRRNFENSPMLYVPEVYSDYCSQNMMVMERIYGIPVSDIVALENQGTNMKLLAERGVQVFFTQVFRDSFFHADMHPGNIFVSYEHPEDPKYIGIDCGIVGSLNKEDKRYLAENFIAFFNRDYRKVAELHVDSGWVPPDTNVEEFEFAIRTVCEPIFEKPLSEISFGHVLLNLFNTARRFNMEVQPQLVLLQKTLLYVEGVGRQLYPQLDLWKTAKPFLESWIKDQVGLPALVRSFKEKAPFWIEKMPEIPELIYDSLRHSKNLQHSMDKITRELQSNRVRQGQSRYLFGIGATLLLSGTLLLINRPDWQMMPAWLMAGGLVVWLIGWRKTR.

The Protein kinase domain occupies 124–502 (DFDIKPLASA…RVRQGQSRYL (379 aa)). ATP contacts are provided by residues 130-138 (LASASIAQV) and Lys153. Asp288 acts as the Proton acceptor in catalysis. Helical transmembrane passes span 501–521 (YLFG…INRP) and 522–542 (DWQM…LIGW).

Belongs to the ABC1 family. UbiB subfamily.

Its subcellular location is the cell inner membrane. The protein operates within cofactor biosynthesis; ubiquinone biosynthesis [regulation]. Its function is as follows. Is probably a protein kinase regulator of UbiI activity which is involved in aerobic coenzyme Q (ubiquinone) biosynthesis. This chain is Probable protein kinase UbiB, found in Enterobacter sp. (strain 638).